A 237-amino-acid polypeptide reads, in one-letter code: Sugar fermentation stimulation protein homolog (237 aa).

The protein belongs to the SfsA family.

This is Sugar fermentation stimulation protein homolog from Pseudomonas putida (strain W619).